Reading from the N-terminus, the 92-residue chain is Small ribosomal subunit protein uS19 (92 aa).

Belongs to the universal ribosomal protein uS19 family.

Functionally, protein S19 forms a complex with S13 that binds strongly to the 16S ribosomal RNA. This Rickettsia prowazekii (strain Madrid E) protein is Small ribosomal subunit protein uS19 (rpsS).